Here is a 283-residue protein sequence, read N- to C-terminus: Thymidylate synthase (283 aa).

Residue R22 coordinates dUMP. The active-site Nucleophile is C160. Residues 180–183 (RSCD), N191, and 221–223 (HIY) each bind dUMP. D183 lines the (6R)-5,10-methylene-5,6,7,8-tetrahydrofolate pocket. S282 contributes to the (6R)-5,10-methylene-5,6,7,8-tetrahydrofolate binding site.

This sequence belongs to the thymidylate synthase family. Bacterial-type ThyA subfamily. In terms of assembly, homodimer.

It localises to the cytoplasm. It catalyses the reaction dUMP + (6R)-5,10-methylene-5,6,7,8-tetrahydrofolate = 7,8-dihydrofolate + dTMP. It participates in pyrimidine metabolism; dTTP biosynthesis. Its function is as follows. Catalyzes the reductive methylation of 2'-deoxyuridine-5'-monophosphate (dUMP) to 2'-deoxythymidine-5'-monophosphate (dTMP) while utilizing 5,10-methylenetetrahydrofolate (mTHF) as the methyl donor and reductant in the reaction, yielding dihydrofolate (DHF) as a by-product. This enzymatic reaction provides an intracellular de novo source of dTMP, an essential precursor for DNA biosynthesis. The protein is Thymidylate synthase of Vibrio atlanticus (strain LGP32) (Vibrio splendidus (strain Mel32)).